A 284-amino-acid polypeptide reads, in one-letter code: Phosphonates import ATP-binding protein PhnC 2 (284 aa).

The 249-residue stretch at 5–253 (IEVRGLSKSF…MLRDLYGTEA (249 aa)) folds into the ABC transporter domain. ATP is bound at residue 38-45 (GASGSGKS).

This sequence belongs to the ABC transporter superfamily. Phosphonates importer (TC 3.A.1.9.1) family. As to quaternary structure, the complex is composed of two ATP-binding proteins (PhnC), two transmembrane proteins (PhnE) and a solute-binding protein (PhnD).

The protein localises to the cell inner membrane. It catalyses the reaction phosphonate(out) + ATP + H2O = phosphonate(in) + ADP + phosphate + H(+). Functionally, part of the ABC transporter complex PhnCDE involved in phosphonates import. Responsible for energy coupling to the transport system. The polypeptide is Phosphonates import ATP-binding protein PhnC 2 (Cupriavidus necator (strain ATCC 17699 / DSM 428 / KCTC 22496 / NCIMB 10442 / H16 / Stanier 337) (Ralstonia eutropha)).